The following is a 281-amino-acid chain: Pantothenate synthetase (281 aa).

An ATP-binding site is contributed by 30–37 (MGYLHEGH). His-37 functions as the Proton donor in the catalytic mechanism. Gln-61 provides a ligand contact to (R)-pantoate. Gln-61 contributes to the beta-alanine binding site. 147–150 (GEKD) contributes to the ATP binding site. Gln-153 is a binding site for (R)-pantoate. Residues Ile-176 and 184–187 (KSSR) each bind ATP.

The protein belongs to the pantothenate synthetase family. Homodimer.

It localises to the cytoplasm. It catalyses the reaction (R)-pantoate + beta-alanine + ATP = (R)-pantothenate + AMP + diphosphate + H(+). It functions in the pathway cofactor biosynthesis; (R)-pantothenate biosynthesis; (R)-pantothenate from (R)-pantoate and beta-alanine: step 1/1. Catalyzes the condensation of pantoate with beta-alanine in an ATP-dependent reaction via a pantoyl-adenylate intermediate. The sequence is that of Pantothenate synthetase from Clostridium botulinum (strain Loch Maree / Type A3).